Reading from the N-terminus, the 373-residue chain is MTDADYAEQLKDLDATLRNIESVLDIDRLRADKARLEEAASAPDLWDDQARAQQVTSQLSYVNGEINKLAELRSRLDDAKVLLELAEAESDPGALTEVEAEVAGLAKAIDEMEVRTLLSGEYDSREALVAIRAGAGGVDAADFAEMLLRMYLRWAERHGYPTEVYETSYAEEAGLKSATFTVKVPYAYGTLSVESGTHRLVRISPFDNQGRRQTSFAGVEVLPVVEQTDHIDIPENEMRFDVYRSSGPGGQSVNTTDSAVRITHIPTGIVVTCQNEKSQLQNKASALRVLQARLLERKRQEEQAKLQGLKTDAAGSWGDQMRSYVLHPYQMVKDLRTEQETGTPAAVFDGELDAFIEAGIRWRKQQQLADDNA.

At Gln251 the chain carries N5-methylglutamine.

It belongs to the prokaryotic/mitochondrial release factor family. Methylated by PrmC. Methylation increases the termination efficiency of RF2.

The protein resides in the cytoplasm. Its function is as follows. Peptide chain release factor 2 directs the termination of translation in response to the peptide chain termination codons UGA and UAA. This chain is Peptide chain release factor 2, found in Salinispora tropica (strain ATCC BAA-916 / DSM 44818 / JCM 13857 / NBRC 105044 / CNB-440).